Consider the following 592-residue polypeptide: Calnexin (592 aa).

The N-terminal stretch at 1-20 is a signal peptide; that stretch reads MEGKWLLCMLLVLGTAIVEA. Topologically, residues 21–481 are lumenal; sequence HDGHDDDVID…QMIEAAEERP (461 aa). Ca(2+) contacts are provided by Ser74 and Asp117. Lys137 bears the N6-acetyllysine mark. Cys160 and Cys194 are joined by a disulfide. An alpha-D-glucoside-binding residues include Tyr164, Lys166, Tyr185, and Asp192. The disordered stretch occupies residues 260–345; that stretch reads GNLLNDMTPP…AEKPEDWDED (86 aa). A compositionally biased stretch (basic and acidic residues) spans 274 to 319; that stretch reads REIEDPEDRKPEDWDERPKIPDPEAVKPDDWDEDAPAKIPDEEATK. A p domain (Extended arm) region spans residues 276–409; sequence IEDPEDRKPE…RKIPNPDFFE (134 aa). Tandem repeats lie at residues 278 to 290, 295 to 307, 314 to 326, 333 to 345, and 348 to 358. 4 X approximate repeats regions lie at residues 278-345 and 348-405; these read DPED…WDED and GEWE…IPNP. Residues 323 to 345 are compositionally biased toward acidic residues; the sequence is WLDDEPEYVPDPDAEKPEDWDED. An interaction with PPIB region spans residues 326–359; sequence DEPEYVPDPDAEKPEDWDEDMDGEWEAPQIANPR. Cys360 and Cys366 are joined by a disulfide. 3 consecutive repeat copies span residues 367-377, 381-391, and 395-405. Glu425 lines the an alpha-D-glucoside pocket. Residue Asp436 participates in Ca(2+) binding. Residues 482-502 traverse the membrane as a helical segment; it reads WLWVVYILTVALPVFLVILFC. 2 S-palmitoyl cysteine lipidation sites follow: Cys502 and Cys503. The Cytoplasmic segment spans residues 503–592; it reads CSGKKQTSGM…SPRNRKPRRE (90 aa). A sufficient to mediate interaction with SGIP1 region spans residues 503-592; sequence CSGKKQTSGM…SPRNRKPRRE (90 aa). A disordered region spans residues 511 to 592; it reads GMEYKKTDAP…SPRNRKPRRE (82 aa). Residues 525–547 are compositionally biased toward acidic residues; the sequence is KEEEEEKEEEKDKGDEEEEGEEK. Ser554 is modified (phosphoserine). Thr562 is modified (phosphothreonine). Ser564 is modified (phosphoserine; by MAPK3). At Ser583 the chain carries Phosphoserine.

This sequence belongs to the calreticulin family. In terms of assembly, interacts with MAPK3/ERK1. Interacts with KCNH2. Associates with ribosomes. Interacts with SGIP1; involved in negative regulation of endocytosis. The palmitoylated form interacts with the ribosome-translocon complex component SSR1, promoting efficient folding of glycoproteins. Interacts with SERPINA2P/SERPINA2 and with the S and Z variants of SERPINA1. Interacts with PPIB. Interacts with ZNRF4. Interacts with SMIM22. Interacts with TMX2. Interacts with TMEM35A/NACHO. Interacts with CHRNA7. Interacts with reticulophagy regulators RETREG2 and RETREG3. Interacts with DNM1L; may form part of a larger protein complex at the ER-mitochondrial interface during mitochondrial fission. Interacts with ADAM7. As to quaternary structure, (Microbial infection) Interacts with HBV large envelope protein, isoform L. (Microbial infection) Interacts with HBV large envelope protein, isoform M; this association may be essential for isoform M proper secretion. In terms of processing, phosphorylated at Ser-564 by MAPK3/ERK1. Phosphorylation by MAPK3/ERK1 increases its association with ribosomes. Post-translationally, palmitoylation by DHHC6 leads to the preferential localization to the perinuclear rough ER. It mediates the association of calnexin with the ribosome-translocon complex (RTC) which is required for efficient folding of glycosylated proteins. Ubiquitinated, leading to proteasomal degradation. Probably ubiquitinated by ZNRF4.

Its subcellular location is the endoplasmic reticulum membrane. It localises to the mitochondrion membrane. It is found in the melanosome membrane. In terms of biological role, calcium-binding protein that interacts with newly synthesized monoglucosylated glycoproteins in the endoplasmic reticulum. It may act in assisting protein assembly and/or in the retention within the ER of unassembled protein subunits. It seems to play a major role in the quality control apparatus of the ER by the retention of incorrectly folded proteins. Associated with partial T-cell antigen receptor complexes that escape the ER of immature thymocytes, it may function as a signaling complex regulating thymocyte maturation. Additionally it may play a role in receptor-mediated endocytosis at the synapse. This Homo sapiens (Human) protein is Calnexin (CANX).